The following is a 693-amino-acid chain: MKIFREVFELGNKEIVLETGGMARQADGSVTVSCGNNVVLVTTVVKKSVAAGADFFPLSVHYLEKTYAAGKIPGGFLRREGRPSEEQILISRLIDRSIRPSFPDGFFNEIQIVATVLSYDGSFSPDMLALIGASASLAISGAPYDDIIAGVRVGYTNGKYILNPNKEELKESDLDLVVSGTDDAILMVESEANSLPESVMLGGILYAHKHLKTIINSISKLAKVSSKPRIEYTIYQINKLLKSQIKSHFFGEIKNAYTIPSKQERNIKLNELRKNVLEHIFTSDVDGNEYSEKEVLEAFHDIEKDLVRSNILEGKPRIDGRCTETIRPINVKIGVLPGVHGSALFTRGETQALVVTTLGSDRDAQLVESLDGIEKSRYMLHYNFPPYSVGECGMVGMAPKRREIGHANLAKRATQAVFPNEEAYPYVVRIVSEILESNGSSSMATVCGSSLSMMDAGVPIAEPVAGIAMGLIKDGAKYAVLSDILGDEDHLGDMDFKVAGTRYGVTALQMDIKIKGISREILEQAFEQARTGRLHILGIMNEVIREHKESVSDVAPQIHIMNVNPAKIKDVVGRGGSVVKGIVEKTGAQIDTSDSGEVKIFAKDKRSLDLAKSMVEEIVAEVEEGQIYKGKIVKLLDSGAFVNLLGSQDGYLPFSEIEQAGMKTNSLVEGQGLEVLVQNIDRGGRVKLSLVAR.

Mg(2+)-binding residues include Asp489 and Asp495. The 60-residue stretch at 556–615 folds into the KH domain; sequence PQIHIMNVNPAKIKDVVGRGGSVVKGIVEKTGAQIDTSDSGEVKIFAKDKRSLDLAKSMV. An S1 motif domain is found at 625-693; it reads GQIYKGKIVK…GRVKLSLVAR (69 aa).

It belongs to the polyribonucleotide nucleotidyltransferase family. In terms of assembly, component of the RNA degradosome, which is a multiprotein complex involved in RNA processing and mRNA degradation. Requires Mg(2+) as cofactor.

Its subcellular location is the cytoplasm. It catalyses the reaction RNA(n+1) + phosphate = RNA(n) + a ribonucleoside 5'-diphosphate. Its function is as follows. Involved in mRNA degradation. Catalyzes the phosphorolysis of single-stranded polyribonucleotides processively in the 3'- to 5'-direction. The sequence is that of Polyribonucleotide nucleotidyltransferase from Francisella philomiragia subsp. philomiragia (strain ATCC 25017 / CCUG 19701 / FSC 153 / O#319-036).